Here is a 297-residue protein sequence, read N- to C-terminus: MNTIVMQADKKLQEKIRTDLAQHHISNNNPYVVFSAKISGTTVLLYTSGKLVFQGSNASHIAQKYGYIEQKESCSSETQDIPIIGTDEVGNGSYFGGLAVVASFVTPKDHAYLKKLGVGDSKTLTDQKIKQIAPLLEKAIPHKALLLSPQKYNQVVGPNNKHNAVSVKVALHNQAIFLLLQDGFEPEKIVIDAFTSSKNYQNYLKNEKNQFKQTITLEEKAENKYLAVAVSSIIARNLFLENLNKLSDDVGYKLPSGAGHQSDKVASQLLKAYGISSLEHCAKLHFANTKKAQALLK.

Residues 81 to 297 form the RNase H type-2 domain; it reads IPIIGTDEVG…NTKKAQALLK (217 aa). A divalent metal cation-binding residues include aspartate 87, glutamate 88, and aspartate 192.

It belongs to the RNase HII family. RnhC subfamily. Requires Mn(2+) as cofactor. It depends on Mg(2+) as a cofactor.

It is found in the cytoplasm. It catalyses the reaction Endonucleolytic cleavage to 5'-phosphomonoester.. Functionally, endonuclease that specifically degrades the RNA of RNA-DNA hybrids. The protein is Ribonuclease HIII of Streptococcus agalactiae serotype III (strain NEM316).